The sequence spans 545 residues: CTP synthase (545 aa).

Residues M1 to L265 form an amidoligase domain region. A CTP-binding site is contributed by S13. S13 serves as a coordination point for UTP. Residues S14 to I19 and D71 contribute to the ATP site. Positions 71 and 139 each coordinate Mg(2+). CTP is bound by residues D146–E148, K186–Q191, and K222. UTP-binding positions include K186–Q191 and K222. The region spanning K290–S544 is the Glutamine amidotransferase type-1 domain. Position 355 (G355) interacts with L-glutamine. C382 acts as the Nucleophile; for glutamine hydrolysis in catalysis. L-glutamine-binding positions include L383–Q386, E406, and R473. Catalysis depends on residues H517 and E519.

It belongs to the CTP synthase family. In terms of assembly, homotetramer.

It catalyses the reaction UTP + L-glutamine + ATP + H2O = CTP + L-glutamate + ADP + phosphate + 2 H(+). The catalysed reaction is L-glutamine + H2O = L-glutamate + NH4(+). The enzyme catalyses UTP + NH4(+) + ATP = CTP + ADP + phosphate + 2 H(+). It participates in pyrimidine metabolism; CTP biosynthesis via de novo pathway; CTP from UDP: step 2/2. With respect to regulation, allosterically activated by GTP, when glutamine is the substrate; GTP has no effect on the reaction when ammonia is the substrate. The allosteric effector GTP functions by stabilizing the protein conformation that binds the tetrahedral intermediate(s) formed during glutamine hydrolysis. Inhibited by the product CTP, via allosteric rather than competitive inhibition. Its function is as follows. Catalyzes the ATP-dependent amination of UTP to CTP with either L-glutamine or ammonia as the source of nitrogen. Regulates intracellular CTP levels through interactions with the four ribonucleotide triphosphates. The chain is CTP synthase from Nautilia profundicola (strain ATCC BAA-1463 / DSM 18972 / AmH).